Consider the following 861-residue polypeptide: Leucine--tRNA ligase (861 aa).

A 'HIGH' region motif is present at residues 42–52 (PYPSGRLHMGH). The 'KMSKS' region motif lies at 619–623 (KMSKS). K622 provides a ligand contact to ATP.

The protein belongs to the class-I aminoacyl-tRNA synthetase family.

Its subcellular location is the cytoplasm. The catalysed reaction is tRNA(Leu) + L-leucine + ATP = L-leucyl-tRNA(Leu) + AMP + diphosphate. This chain is Leucine--tRNA ligase, found in Haemophilus influenzae (strain PittGG).